We begin with the raw amino-acid sequence, 101 residues long: NAD(P)H-quinone oxidoreductase subunit 4L, chloroplastic (101 aa).

3 helical membrane-spanning segments follow: residues 2–22 (MFEY…YGLI), 32–52 (MCLE…SDLF), and 61–81 (IFSI…PAIV).

Belongs to the complex I subunit 4L family. In terms of assembly, NDH is composed of at least 16 different subunits, 5 of which are encoded in the nucleus.

The protein localises to the plastid. It localises to the chloroplast thylakoid membrane. The enzyme catalyses a plastoquinone + NADH + (n+1) H(+)(in) = a plastoquinol + NAD(+) + n H(+)(out). It catalyses the reaction a plastoquinone + NADPH + (n+1) H(+)(in) = a plastoquinol + NADP(+) + n H(+)(out). NDH shuttles electrons from NAD(P)H:plastoquinone, via FMN and iron-sulfur (Fe-S) centers, to quinones in the photosynthetic chain and possibly in a chloroplast respiratory chain. The immediate electron acceptor for the enzyme in this species is believed to be plastoquinone. Couples the redox reaction to proton translocation, and thus conserves the redox energy in a proton gradient. The protein is NAD(P)H-quinone oxidoreductase subunit 4L, chloroplastic of Amborella trichopoda.